A 327-amino-acid polypeptide reads, in one-letter code: MAWWKAWIEQEGVTVKSSSHFNPDPDAETLYKAMKGIGTNEQAIIDVLTKRSNTQRQQIAKSFKAQFGKDLTETLKSELSGKFERLIVALMYPPYRYEAKELHDAMKSLGTKEGVIIEILASRTKNQLREIMKAYEEDYGSSLEEDIQADTSGYLERILVCLLQGSRDDVSSFVDPGLALQDAHDLYAAGEKIRGTDEMKFITILCTRSATHLLRVFEEYEKIANKSIEDSIKSETHGSLEEAMLTVVKCTQNLHSYFAERLYYAMKGAGTRDGTLIRNIVSRSEIDLNLIKCHFKKMYGKTLSSMIMEDTSGDYKNALLSLVGSDP.

Annexin repeat units follow at residues 21–92 (FNPD…ALMY), 93–164 (PPYR…CLLQ), 177–249 (GLAL…TVVK), and 253–324 (NLHS…SLVG). 4 residues coordinate Ca(2+): Met266, Gly268, Gly270, and Asp310.

It belongs to the annexin family.

Functionally, this protein is an anticoagulant protein that acts as an indirect inhibitor of the thromboplastin-specific complex, which is involved in the blood coagulation cascade. This is Annexin A8 (ANXA8) from Pan troglodytes (Chimpanzee).